A 343-amino-acid polypeptide reads, in one-letter code: Anthranilate phosphoribosyltransferase (343 aa).

5-phospho-alpha-D-ribose 1-diphosphate-binding positions include G84, 87–88, T92, 94–97, 112–120, and S124; these read GD, NIST, and KHGNRSASS. G84 is an anthranilate binding site. Residue S96 coordinates Mg(2+). Residue N115 coordinates anthranilate. Position 170 (R170) interacts with anthranilate. Residues D229 and E230 each contribute to the Mg(2+) site.

It belongs to the anthranilate phosphoribosyltransferase family. In terms of assembly, homodimer. Requires Mg(2+) as cofactor.

The catalysed reaction is N-(5-phospho-beta-D-ribosyl)anthranilate + diphosphate = 5-phospho-alpha-D-ribose 1-diphosphate + anthranilate. It functions in the pathway amino-acid biosynthesis; L-tryptophan biosynthesis; L-tryptophan from chorismate: step 2/5. In terms of biological role, catalyzes the transfer of the phosphoribosyl group of 5-phosphorylribose-1-pyrophosphate (PRPP) to anthranilate to yield N-(5'-phosphoribosyl)-anthranilate (PRA). The chain is Anthranilate phosphoribosyltransferase from Bordetella pertussis (strain Tohama I / ATCC BAA-589 / NCTC 13251).